The chain runs to 64 residues: Translation machinery-associated protein 7 homolog (64 aa).

The segment at 1 to 64 (MSGRQGGKAK…GGGIKKSGKK (64 aa)) is disordered. A coiled-coil region spans residues 21–50 (DLSEEDVEFKKKQQEEAKKIKEMAAKAGQR). Positions 28–44 (EFKKKQQEEAKKIKEMA) are enriched in basic and acidic residues. The span at 53–64 (LLGGGIKKSGKK) shows a compositional bias: gly residues.

Belongs to the TMA7 family.

The protein is Translation machinery-associated protein 7 homolog of Caenorhabditis elegans.